A 518-amino-acid polypeptide reads, in one-letter code: Serine hydroxymethyltransferase, mitochondrial (518 aa).

Residues 1 to 31 (MAMAMALRKLSSSVNKSSRPLFSASSLYYKS) constitute a mitochondrion transit peptide. K287 bears the N6-(pyridoxal phosphate)lysine mark.

Belongs to the SHMT family. In terms of assembly, homotetramer. Pyridoxal 5'-phosphate is required as a cofactor.

It localises to the mitochondrion. The enzyme catalyses (6R)-5,10-methylene-5,6,7,8-tetrahydrofolate + glycine + H2O = (6S)-5,6,7,8-tetrahydrofolate + L-serine. The protein operates within one-carbon metabolism; tetrahydrofolate interconversion. In terms of biological role, catalyzes the interconversion of serine and glycine. This is Serine hydroxymethyltransferase, mitochondrial from Pisum sativum (Garden pea).